Here is a 108-residue protein sequence, read N- to C-terminus: UPF0060 membrane protein SA2130 (108 aa).

Transmembrane regions (helical) follow at residues 5–25 (IFIF…IWLW), 31–51 (SSLV…IATF), 60–80 (VYAA…MVVD), and 86–106 (KYDV…LLPS).

Belongs to the UPF0060 family.

The protein resides in the cell membrane. In Staphylococcus aureus (strain N315), this protein is UPF0060 membrane protein SA2130.